The sequence spans 706 residues: DNA ligase (706 aa).

Residues 40–44 (DLQYD), 89–90 (SI), and Glu-120 each bind NAD(+). Residue Lys-122 is the N6-AMP-lysine intermediate of the active site. Residues Arg-143, Glu-190, Lys-306, and Lys-330 each contribute to the NAD(+) site. Positions 424, 427, 442, and 447 each coordinate Zn(2+). The 82-residue stretch at 625–706 (EANLPLAGKN…FRLRYETEAT (82 aa)) folds into the BRCT domain.

Belongs to the NAD-dependent DNA ligase family. LigA subfamily. Mg(2+) is required as a cofactor. It depends on Mn(2+) as a cofactor.

The catalysed reaction is NAD(+) + (deoxyribonucleotide)n-3'-hydroxyl + 5'-phospho-(deoxyribonucleotide)m = (deoxyribonucleotide)n+m + AMP + beta-nicotinamide D-nucleotide.. Functionally, DNA ligase that catalyzes the formation of phosphodiester linkages between 5'-phosphoryl and 3'-hydroxyl groups in double-stranded DNA using NAD as a coenzyme and as the energy source for the reaction. It is essential for DNA replication and repair of damaged DNA. In Rhodopirellula baltica (strain DSM 10527 / NCIMB 13988 / SH1), this protein is DNA ligase.